The following is a 165-amino-acid chain: Large ribosomal subunit protein uL11 (165 aa).

N5-methylarginine is present on arginine 67.

Belongs to the universal ribosomal protein uL11 family. As to quaternary structure, component of the large ribosomal subunit (LSU). Mature N.crassa ribosomes consist of a small (40S) and a large (60S) subunit. The 40S small subunit contains 1 molecule of ribosomal RNA (18S rRNA) and at least 32 different proteins. The large 60S subunit contains 3 rRNA molecules (26S, 5.8S and 5S rRNA) and at least 42 different proteins.

It localises to the cytoplasm. Functionally, component of the ribosome, a large ribonucleoprotein complex responsible for the synthesis of proteins in the cell. The small ribosomal subunit (SSU) binds messenger RNAs (mRNAs) and translates the encoded message by selecting cognate aminoacyl-transfer RNA (tRNA) molecules. The large subunit (LSU) contains the ribosomal catalytic site termed the peptidyl transferase center (PTC), which catalyzes the formation of peptide bonds, thereby polymerizing the amino acids delivered by tRNAs into a polypeptide chain. The nascent polypeptides leave the ribosome through a tunnel in the LSU and interact with protein factors that function in enzymatic processing, targeting, and the membrane insertion of nascent chains at the exit of the ribosomal tunnel. This chain is Large ribosomal subunit protein uL11 (rpl-12), found in Neurospora crassa (strain ATCC 24698 / 74-OR23-1A / CBS 708.71 / DSM 1257 / FGSC 987).